We begin with the raw amino-acid sequence, 45 residues long: Large ribosomal subunit protein bL34 (45 aa).

Belongs to the bacterial ribosomal protein bL34 family.

The sequence is that of Large ribosomal subunit protein bL34 from Frankia casuarinae (strain DSM 45818 / CECT 9043 / HFP020203 / CcI3).